The following is a 340-amino-acid chain: Phosphate acyltransferase (340 aa).

It belongs to the PlsX family. In terms of assembly, homodimer. Probably interacts with PlsY.

Its subcellular location is the cytoplasm. The catalysed reaction is a fatty acyl-[ACP] + phosphate = an acyl phosphate + holo-[ACP]. It participates in lipid metabolism; phospholipid metabolism. Catalyzes the reversible formation of acyl-phosphate (acyl-PO(4)) from acyl-[acyl-carrier-protein] (acyl-ACP). This enzyme utilizes acyl-ACP as fatty acyl donor, but not acyl-CoA. The sequence is that of Phosphate acyltransferase from Pseudomonas syringae pv. syringae (strain B728a).